Reading from the N-terminus, the 474-residue chain is Hepatocyte nuclear factor 4-alpha (474 aa).

The segment at residues 57-132 (SALCAICGDR…AGMKKEAVQN (76 aa)) is a DNA-binding region (nuclear receptor). NR C4-type zinc fingers lie at residues 60 to 80 (CAIC…CDGC) and 96 to 120 (CRFS…LKKC). Phosphoserine; by PKA occurs at positions 142 and 143. A Phosphotyrosine modification is found at Tyr-144. One can recognise an NR LBD domain in the interval 147 to 377 (SSLPSINALL…NLLQEMLLGG (231 aa)). Thr-166 is modified (phosphothreonine). Ser-167 carries the post-translational modification Phosphoserine. Residues Lys-234 and Lys-307 each participate in a glycyl lysine isopeptide (Lys-Gly) (interchain with G-Cter in ubiquitin) cross-link. At Ser-313 the chain carries Phosphoserine; by AMPK. Residues 368–376 (NLLQEMLLG) carry the 9aaTAD motif. The disordered stretch occupies residues 413-450 (SNGQMCEWPRPRGQAATPETPQPSPPSGSGSESYKLLP). Phosphothreonine occurs at positions 429 and 432. Phosphoserine is present on Ser-436. Residue Lys-458 is modified to N6-acetyllysine.

It belongs to the nuclear hormone receptor family. NR2 subfamily. Homodimerization is required for HNF4-alpha to bind to its recognition site. Interacts with CLOCK, BMAL1, CRY1, CRY2, PER1 and PER2. Interacts with NR0B2/SHP; the resulting heterodimer is transcriptionally inactive. Interacts with DDX3X; this interaction disrupts the interaction between HNF4 and NR0B2 that forms inactive heterodimers and enhances the formation of active HNF4 homodimers. Phosphorylation at Ser-313 by AMPK reduces the ability to form homodimers and bind DNA. Phosphorylated in the recognition sequence R-R-S-S near the DNA-binding domain; phosphorylation results in decrease in DNA-binding activity. Phosphorylation of HNF4 depends on the diet and is decreased by a carbohydrate-rich diet and is increased by fasting. In terms of processing, the N-terminus is blocked. Post-translationally, acetylation at Lys-458 lowers transcriptional activation by about two-fold. Liver, kidney and intestine.

Its subcellular location is the nucleus. Its function is as follows. Transcriptional regulator which controls the expression of hepatic genes during the transition of endodermal cells to hepatic progenitor cells, facilitating the recruitment of RNA pol II to the promoters of target genes. Activates the transcription of CYP2C38. Represses the CLOCK-BMAL1 transcriptional activity and is essential for circadian rhythm maintenance and period regulation in the liver and colon cells. In Rattus norvegicus (Rat), this protein is Hepatocyte nuclear factor 4-alpha (Hnf4a).